We begin with the raw amino-acid sequence, 349 residues long: Phenylalanine--tRNA ligase alpha subunit (349 aa).

Glu-258 is a Mg(2+) binding site.

Belongs to the class-II aminoacyl-tRNA synthetase family. Phe-tRNA synthetase alpha subunit type 1 subfamily. Tetramer of two alpha and two beta subunits. Mg(2+) is required as a cofactor.

The protein resides in the cytoplasm. The catalysed reaction is tRNA(Phe) + L-phenylalanine + ATP = L-phenylalanyl-tRNA(Phe) + AMP + diphosphate + H(+). The polypeptide is Phenylalanine--tRNA ligase alpha subunit (Rickettsia rickettsii (strain Sheila Smith)).